We begin with the raw amino-acid sequence, 423 residues long: Cytochrome b mRNA maturase bI2 (423 aa).

At 1–31 the chain is on the mitochondrial matrix side; it reads MAFRKSNVYLSLVNSYIIDSPQPSSINYWWN. Residues 1–143 form a cytochrome b region; the sequence is MAFRKSNVYL…CVYGQMSHWG (143 aa). Residues 32 to 52 form a helical membrane-spanning segment; that stretch reads MGSLLGLCLVIQIVTGIFMAM. At 53–84 the chain is on the mitochondrial intermembrane side; the sequence is HYSSNIELAFSSVEHIMRDVHNGYILRYLHAN. A helical membrane pass occupies residues 85-105; that stretch reads GASFFFMVMFMHMAKGLYYGS. The Mitochondrial matrix segment spans residues 106-115; sequence YRSPRVTLWN. A helical transmembrane segment spans residues 116-136; that stretch reads VGVIIFILTIATAFLGYCCVY. Residues 137 to 153 lie on the Mitochondrial intermembrane side of the membrane; the sequence is GQMSHWGNMNIASNMFN. A maturase region spans residues 144-423; that stretch reads NMNIASNMFN…SMKYKLGNYL (280 aa). The helical transmembrane segment at 154-174 threads the bilayer; it reads MMKTIYMMMLMLLIYIFYTIM. The Mitochondrial matrix portion of the chain corresponds to 175–423; sequence MRQMMKTKEY…SMKYKLGNYL (249 aa).

The protein in the N-terminal section; belongs to the cytochrome b family. In the C-terminal section; belongs to the LAGLIDADG endonuclease family.

Its subcellular location is the mitochondrion inner membrane. This protein is responsible for splicing and maturation of cytochrome b mRNA. Specifically, it may be responsible for the splicing specificity of the second intron. The protein is Cytochrome b mRNA maturase bI2 (BI2) of Saccharomyces cerevisiae (strain ATCC 204508 / S288c) (Baker's yeast).